We begin with the raw amino-acid sequence, 441 residues long: tRNA-2-methylthio-N(6)-dimethylallyladenosine synthase (441 aa).

The 117-residue stretch at 3-119 (KKVSIRTFGC…LPGLIRNAFQ (117 aa)) folds into the MTTase N-terminal domain. C12, C48, C82, C155, C159, and C162 together coordinate [4Fe-4S] cluster. One can recognise a Radical SAM core domain in the interval 141–371 (RSGSISAFIP…IDLQSGISGE (231 aa)). In terms of domain architecture, TRAM spans 374–437 (GNDVGSVQEV…QATLIGRCQD (64 aa)).

Belongs to the methylthiotransferase family. MiaB subfamily. Monomer. It depends on [4Fe-4S] cluster as a cofactor.

The protein localises to the cytoplasm. It carries out the reaction N(6)-dimethylallyladenosine(37) in tRNA + (sulfur carrier)-SH + AH2 + 2 S-adenosyl-L-methionine = 2-methylsulfanyl-N(6)-dimethylallyladenosine(37) in tRNA + (sulfur carrier)-H + 5'-deoxyadenosine + L-methionine + A + S-adenosyl-L-homocysteine + 2 H(+). Its function is as follows. Catalyzes the methylthiolation of N6-(dimethylallyl)adenosine (i(6)A), leading to the formation of 2-methylthio-N6-(dimethylallyl)adenosine (ms(2)i(6)A) at position 37 in tRNAs that read codons beginning with uridine. This Prosthecochloris aestuarii (strain DSM 271 / SK 413) protein is tRNA-2-methylthio-N(6)-dimethylallyladenosine synthase.